The sequence spans 407 residues: Formamidase (407 aa).

In terms of assembly, homotrimer.

It carries out the reaction formamide + H2O = formate + NH4(+). Its function is as follows. Hydrolyzes formamide with the production of ammonia which can be used as a source of nitrogen for growth. Also acts, more slowly, on acetamide, propanamide and butanamide. The polypeptide is Formamidase (fmdA) (Methylophilus methylotrophus (Bacterium W3A1)).